The chain runs to 227 residues: MAYPFELGFQDATSPIMEELLHFHDHTLMIVFLISSLVLYIISLMLTTKLTHTSTMDAQEVETIWTILPAIILILIALPSLRILYMMDEINDPSLTVKTMGHQWYWSYEYTDYEDLNFDSYMIPTSDLSPGELRLLEVDNRVVLPMELPIRMLISSEDVLHSWAIPSLGLKTDAIPGRLNQATLTSTRPGLYYGQCSEICGSNHSFMPIVLELVPLKHFENWSSSML.

Topologically, residues 1-14 (MAYPFELGFQDATS) are mitochondrial intermembrane. A helical membrane pass occupies residues 15-45 (PIMEELLHFHDHTLMIVFLISSLVLYIISLM). The Mitochondrial matrix segment spans residues 46-59 (LTTKLTHTSTMDAQ). The chain crosses the membrane as a helical span at residues 60 to 87 (EVETIWTILPAIILILIALPSLRILYMM). Topologically, residues 88 to 227 (DEINDPSLTV…HFENWSSSML (140 aa)) are mitochondrial intermembrane. Cu cation contacts are provided by His-161, Cys-196, Glu-198, Cys-200, His-204, and Met-207. Residue Glu-198 participates in Mg(2+) binding.

The protein belongs to the cytochrome c oxidase subunit 2 family. Component of the cytochrome c oxidase (complex IV, CIV), a multisubunit enzyme composed of 14 subunits. The complex is composed of a catalytic core of 3 subunits MT-CO1, MT-CO2 and MT-CO3, encoded in the mitochondrial DNA, and 11 supernumerary subunits COX4I, COX5A, COX5B, COX6A, COX6B, COX6C, COX7A, COX7B, COX7C, COX8 and NDUFA4, which are encoded in the nuclear genome. The complex exists as a monomer or a dimer and forms supercomplexes (SCs) in the inner mitochondrial membrane with NADH-ubiquinone oxidoreductase (complex I, CI) and ubiquinol-cytochrome c oxidoreductase (cytochrome b-c1 complex, complex III, CIII), resulting in different assemblies (supercomplex SCI(1)III(2)IV(1) and megacomplex MCI(2)III(2)IV(2)). Found in a complex with TMEM177, COA6, COX18, COX20, SCO1 and SCO2. Interacts with TMEM177 in a COX20-dependent manner. Interacts with COX20. Interacts with COX16. The cofactor is Cu cation.

The protein resides in the mitochondrion inner membrane. The enzyme catalyses 4 Fe(II)-[cytochrome c] + O2 + 8 H(+)(in) = 4 Fe(III)-[cytochrome c] + 2 H2O + 4 H(+)(out). Functionally, component of the cytochrome c oxidase, the last enzyme in the mitochondrial electron transport chain which drives oxidative phosphorylation. The respiratory chain contains 3 multisubunit complexes succinate dehydrogenase (complex II, CII), ubiquinol-cytochrome c oxidoreductase (cytochrome b-c1 complex, complex III, CIII) and cytochrome c oxidase (complex IV, CIV), that cooperate to transfer electrons derived from NADH and succinate to molecular oxygen, creating an electrochemical gradient over the inner membrane that drives transmembrane transport and the ATP synthase. Cytochrome c oxidase is the component of the respiratory chain that catalyzes the reduction of oxygen to water. Electrons originating from reduced cytochrome c in the intermembrane space (IMS) are transferred via the dinuclear copper A center (CU(A)) of subunit 2 and heme A of subunit 1 to the active site in subunit 1, a binuclear center (BNC) formed by heme A3 and copper B (CU(B)). The BNC reduces molecular oxygen to 2 water molecules using 4 electrons from cytochrome c in the IMS and 4 protons from the mitochondrial matrix. This Neotamias bulleri (Buller's chipmunk) protein is Cytochrome c oxidase subunit 2 (MT-CO2).